Consider the following 433-residue polypeptide: Serine--tRNA ligase (433 aa).

236 to 238 (TAE) contacts L-serine. 267–269 (RSE) serves as a coordination point for ATP. Glu290 is a binding site for L-serine. 354–357 (EISS) provides a ligand contact to ATP. Ser394 contacts L-serine.

This sequence belongs to the class-II aminoacyl-tRNA synthetase family. Type-1 seryl-tRNA synthetase subfamily. In terms of assembly, homodimer. The tRNA molecule binds across the dimer.

It is found in the cytoplasm. It catalyses the reaction tRNA(Ser) + L-serine + ATP = L-seryl-tRNA(Ser) + AMP + diphosphate + H(+). It carries out the reaction tRNA(Sec) + L-serine + ATP = L-seryl-tRNA(Sec) + AMP + diphosphate + H(+). It participates in aminoacyl-tRNA biosynthesis; selenocysteinyl-tRNA(Sec) biosynthesis; L-seryl-tRNA(Sec) from L-serine and tRNA(Sec): step 1/1. Its function is as follows. Catalyzes the attachment of serine to tRNA(Ser). Is also able to aminoacylate tRNA(Sec) with serine, to form the misacylated tRNA L-seryl-tRNA(Sec), which will be further converted into selenocysteinyl-tRNA(Sec). The protein is Serine--tRNA ligase of Acidiphilium cryptum (strain JF-5).